The following is a 431-amino-acid chain: Nuclear receptor subfamily 1 group I member 2 (431 aa).

2 consecutive NR C4-type zinc fingers follow at residues 38–58 (CRVC…CEGC) and 74–99 (CPFR…LRKC). The segment at residues 38–104 (CRVCGDKANG…RLRKCLESGM (67 aa)) is a DNA-binding region (nuclear receptor). The Bipartite nuclear localization signal signature appears at 63-89 (RRAMKRNVRLRCPFRKGTCEITRKTRR). The segment at 105-142 (KKEMIMSDAAVEQRRALIKRKKREKIEAPPPGGQGLTE) is hinge. The NR LBD domain maps to 143–430 (EQQALIQELM…LMQELFSSTD (288 aa)). Hyperforin-binding positions include S244 and 282-285 (ILRF).

This sequence belongs to the nuclear hormone receptor family. NR1 subfamily. In terms of assembly, heterodimer with RXRA. Interacts with NCOA1. Interacts (via domain NR LBD) with CRY1 and CRY2 in a ligand-dependent manner.

It is found in the nucleus. In terms of biological role, nuclear receptor that binds and is activated by a variety of endogenous and xenobiotic compounds. Transcription factor that activates the transcription of multiple genes involved in the metabolism and secretion of potentially harmful xenobiotics, endogenous compounds and drugs. Response to specific ligands is species-specific, due to differences in the ligand-binding domain. Activated by naturally occurring steroids, such as pregnenolone and progesterone. Binds to a response element in the promoters of the CYP3A4 and ABCB1/MDR1 genes. In Rattus norvegicus (Rat), this protein is Nuclear receptor subfamily 1 group I member 2 (Nr1i2).